A 44-amino-acid polypeptide reads, in one-letter code: MLKIFNTKFIRSAPVVAAVWLSLTAGIIIEFNRFFPDLLFHPMS.

A helical transmembrane segment spans residues 9 to 29 (FIRSAPVVAAVWLSLTAGIII).

The protein belongs to the PsaJ family.

Its subcellular location is the cellular thylakoid membrane. Its function is as follows. May help in the organization of the PsaE and PsaF subunits. In Prochlorococcus marinus subsp. pastoris (strain CCMP1986 / NIES-2087 / MED4), this protein is Photosystem I reaction center subunit IX.